Reading from the N-terminus, the 300-residue chain is Peptidyl-prolyl cis-trans isomerase E (300 aa).

Residues 6-84 (RTIYVGGLAD…RTIRVNLAKP (79 aa)) form the RRM domain. The region spanning 142–298 (FFDIRIGGND…QKIVIYSCGE (157 aa)) is the PPIase cyclophilin-type domain.

Belongs to the cyclophilin-type PPIase family. PPIase E subfamily.

The protein localises to the nucleus. It catalyses the reaction [protein]-peptidylproline (omega=180) = [protein]-peptidylproline (omega=0). Its function is as follows. PPIases accelerate the folding of proteins. It catalyzes the cis-trans isomerization of proline imidic peptide bonds in oligopeptides. Combines RNA-binding and PPIase activities. This chain is Peptidyl-prolyl cis-trans isomerase E (cyp33), found in Drosophila melanogaster (Fruit fly).